A 379-amino-acid polypeptide reads, in one-letter code: UDP-4-amino-4-deoxy-L-arabinose--oxoglutarate aminotransferase (379 aa).

At lysine 182 the chain carries N6-(pyridoxal phosphate)lysine.

The protein belongs to the DegT/DnrJ/EryC1 family. ArnB subfamily. In terms of assembly, homodimer. Pyridoxal 5'-phosphate is required as a cofactor.

The enzyme catalyses UDP-4-amino-4-deoxy-beta-L-arabinose + 2-oxoglutarate = UDP-beta-L-threo-pentopyranos-4-ulose + L-glutamate. It participates in nucleotide-sugar biosynthesis; UDP-4-deoxy-4-formamido-beta-L-arabinose biosynthesis; UDP-4-deoxy-4-formamido-beta-L-arabinose from UDP-alpha-D-glucuronate: step 2/3. Its pathway is bacterial outer membrane biogenesis; lipopolysaccharide biosynthesis. Catalyzes the conversion of UDP-4-keto-arabinose (UDP-Ara4O) to UDP-4-amino-4-deoxy-L-arabinose (UDP-L-Ara4N). The modified arabinose is attached to lipid A and is required for resistance to polymyxin and cationic antimicrobial peptides. The protein is UDP-4-amino-4-deoxy-L-arabinose--oxoglutarate aminotransferase of Salmonella agona (strain SL483).